Consider the following 463-residue polypeptide: 23S rRNA (uracil(1939)-C(5))-methyltransferase RlmD (463 aa).

The TRAM domain maps to 6-76 (KSRKPQQPEY…KRLEEAEMVA (71 aa)). [4Fe-4S] cluster contacts are provided by Cys-90, Cys-96, Cys-99, and Cys-178. Positions 288, 317, 322, 341, 368, and 389 each coordinate S-adenosyl-L-methionine. Cys-415 serves as the catalytic Nucleophile.

Belongs to the class I-like SAM-binding methyltransferase superfamily. RNA M5U methyltransferase family. RlmD subfamily.

It catalyses the reaction uridine(1939) in 23S rRNA + S-adenosyl-L-methionine = 5-methyluridine(1939) in 23S rRNA + S-adenosyl-L-homocysteine + H(+). In terms of biological role, catalyzes the formation of 5-methyl-uridine at position 1939 (m5U1939) in 23S rRNA. The chain is 23S rRNA (uracil(1939)-C(5))-methyltransferase RlmD from Acinetobacter baumannii (strain ACICU).